The primary structure comprises 243 residues: tRNA (guanine-N(1)-)-methyltransferase (243 aa).

Residues Gly123 and 143–148 contribute to the S-adenosyl-L-methionine site; that span reads LGDFVM.

Belongs to the RNA methyltransferase TrmD family. Homodimer.

Its subcellular location is the cytoplasm. The catalysed reaction is guanosine(37) in tRNA + S-adenosyl-L-methionine = N(1)-methylguanosine(37) in tRNA + S-adenosyl-L-homocysteine + H(+). Specifically methylates guanosine-37 in various tRNAs. In Ruegeria pomeroyi (strain ATCC 700808 / DSM 15171 / DSS-3) (Silicibacter pomeroyi), this protein is tRNA (guanine-N(1)-)-methyltransferase.